Here is a 507-residue protein sequence, read N- to C-terminus: Lysine--tRNA ligase (507 aa).

Residues Glu416 and Glu423 each contribute to the Mg(2+) site.

Belongs to the class-II aminoacyl-tRNA synthetase family. As to quaternary structure, homodimer. Mg(2+) is required as a cofactor.

The protein localises to the cytoplasm. It catalyses the reaction tRNA(Lys) + L-lysine + ATP = L-lysyl-tRNA(Lys) + AMP + diphosphate. The polypeptide is Lysine--tRNA ligase (Hahella chejuensis (strain KCTC 2396)).